The chain runs to 239 residues: Fatty acid metabolism regulator protein (239 aa).

Positions 6 to 74 (QSPAGFAEEY…HGKPTKVNNF (69 aa)) constitute an HTH gntR-type domain. Residues 34 to 53 (ERELSELIGVTRTTLREVLQ) constitute a DNA-binding region (H-T-H motif).

In terms of assembly, homodimer.

The protein localises to the cytoplasm. Its function is as follows. Multifunctional regulator of fatty acid metabolism. Represses transcription of at least eight genes required for fatty acid transport and beta-oxidation including fadA, fadB, fadD, fadL and fadE. Activates transcription of at least three genes required for unsaturated fatty acid biosynthesis: fabA, fabB and iclR, the gene encoding the transcriptional regulator of the aceBAK operon encoding the glyoxylate shunt enzymes. Binding of FadR is specifically inhibited by long chain fatty acyl-CoA compounds. This is Fatty acid metabolism regulator protein from Salmonella typhi.